Here is a 40-residue protein sequence, read N- to C-terminus: Photosystem II reaction center protein J (40 aa).

A helical membrane pass occupies residues 8–28; it reads IPLWLIGTVAGIPVIGSVGVF.

This sequence belongs to the PsbJ family. In terms of assembly, PSII is composed of 1 copy each of membrane proteins PsbA, PsbB, PsbC, PsbD, PsbE, PsbF, PsbH, PsbI, PsbJ, PsbK, PsbL, PsbM, PsbT, PsbX, PsbY, PsbZ, Psb30/Ycf12, at least 3 peripheral proteins of the oxygen-evolving complex and a large number of cofactors. It forms dimeric complexes.

It localises to the plastid. It is found in the chloroplast thylakoid membrane. Functionally, one of the components of the core complex of photosystem II (PSII). PSII is a light-driven water:plastoquinone oxidoreductase that uses light energy to abstract electrons from H(2)O, generating O(2) and a proton gradient subsequently used for ATP formation. It consists of a core antenna complex that captures photons, and an electron transfer chain that converts photonic excitation into a charge separation. This chain is Photosystem II reaction center protein J, found in Acorus calamus (Sweet flag).